The primary structure comprises 72 residues: Translation initiation factor IF-1 1 (72 aa).

One can recognise an S1-like domain in the interval 1–72; it reads MSKDDVIQMQ…TRARIVFRSK (72 aa).

The protein belongs to the IF-1 family. In terms of assembly, component of the 30S ribosomal translation pre-initiation complex which assembles on the 30S ribosome in the order IF-2 and IF-3, IF-1 and N-formylmethionyl-tRNA(fMet); mRNA recruitment can occur at any time during PIC assembly.

Its subcellular location is the cytoplasm. One of the essential components for the initiation of protein synthesis. Stabilizes the binding of IF-2 and IF-3 on the 30S subunit to which N-formylmethionyl-tRNA(fMet) subsequently binds. Helps modulate mRNA selection, yielding the 30S pre-initiation complex (PIC). Upon addition of the 50S ribosomal subunit IF-1, IF-2 and IF-3 are released leaving the mature 70S translation initiation complex. The sequence is that of Translation initiation factor IF-1 1 from Bordetella avium (strain 197N).